The primary structure comprises 249 residues: Phosphate import ATP-binding protein PstB 2 (249 aa).

Positions 4-244 (FDIENLDLYY…PSDDRTRGYV (241 aa)) constitute an ABC transporter domain. 36 to 43 (GPSGCGKS) provides a ligand contact to ATP.

It belongs to the ABC transporter superfamily. Phosphate importer (TC 3.A.1.7) family. As to quaternary structure, the complex is composed of two ATP-binding proteins (PstB), two transmembrane proteins (PstC and PstA) and a solute-binding protein (PstS).

The protein localises to the cell inner membrane. The enzyme catalyses phosphate(out) + ATP + H2O = ADP + 2 phosphate(in) + H(+). Its function is as follows. Part of the ABC transporter complex PstSACB involved in phosphate import. Responsible for energy coupling to the transport system. This is Phosphate import ATP-binding protein PstB 2 from Vibrio vulnificus (strain CMCP6).